We begin with the raw amino-acid sequence, 386 residues long: Oxysterol-binding protein-related protein 4A (386 aa).

It belongs to the OSBP family. In terms of tissue distribution, expressed in roots, stems and flowers.

May be involved in the transport of sterols. The polypeptide is Oxysterol-binding protein-related protein 4A (ORP4A) (Arabidopsis thaliana (Mouse-ear cress)).